We begin with the raw amino-acid sequence, 611 residues long: Mitogen-activated protein kinase 10 (611 aa).

Residues 25–316 (YKIQEVIGKG…AEEALAHPYF (292 aa)) form the Protein kinase domain. ATP-binding positions include 31 to 39 (IGKGSYGVV) and Lys54. Asp151 serves as the catalytic Proton acceptor. Thr187 is modified (phosphothreonine). Residues 187-189 (TDY) carry the TXY motif. Tyr189 is modified (phosphotyrosine). Residues 394 to 481 (ENGGNGPVIP…RVVGPVLPYE (88 aa)) form a disordered region. The span at 426–439 (EQPRIGPSRDKPSD) shows a compositional bias: basic and acidic residues.

The protein belongs to the protein kinase superfamily. CMGC Ser/Thr protein kinase family. MAP kinase subfamily. Dually phosphorylated on Thr-187 and Tyr-189, which activates the enzyme.

It catalyses the reaction L-seryl-[protein] + ATP = O-phospho-L-seryl-[protein] + ADP + H(+). It carries out the reaction L-threonyl-[protein] + ATP = O-phospho-L-threonyl-[protein] + ADP + H(+). Its activity is regulated as follows. Activated by threonine and tyrosine phosphorylation. The chain is Mitogen-activated protein kinase 10 (MPK10) from Oryza sativa subsp. japonica (Rice).